The sequence spans 201 residues: FMN-dependent NADH:quinone oxidoreductase (201 aa).

FMN-binding positions include Ser-10, 16–18 (SQS), 96–99 (MYNF), and 140–143 (SRGG).

Belongs to the azoreductase type 1 family. As to quaternary structure, homodimer. The cofactor is FMN.

The enzyme catalyses 2 a quinone + NADH + H(+) = 2 a 1,4-benzosemiquinone + NAD(+). It catalyses the reaction N,N-dimethyl-1,4-phenylenediamine + anthranilate + 2 NAD(+) = 2-(4-dimethylaminophenyl)diazenylbenzoate + 2 NADH + 2 H(+). In terms of biological role, quinone reductase that provides resistance to thiol-specific stress caused by electrophilic quinones. Functionally, also exhibits azoreductase activity. Catalyzes the reductive cleavage of the azo bond in aromatic azo compounds to the corresponding amines. This is FMN-dependent NADH:quinone oxidoreductase from Salmonella paratyphi A (strain ATCC 9150 / SARB42).